The following is a 208-amino-acid chain: Guanylate kinase (208 aa).

The Guanylate kinase-like domain occupies 3–181; sequence GSLFIITAAS…ALTELKAIIV (179 aa). An ATP-binding site is contributed by 10 to 17; the sequence is AASGTGKT.

Belongs to the guanylate kinase family.

The protein resides in the cytoplasm. The catalysed reaction is GMP + ATP = GDP + ADP. Functionally, essential for recycling GMP and indirectly, cGMP. In Psychrobacter arcticus (strain DSM 17307 / VKM B-2377 / 273-4), this protein is Guanylate kinase.